The primary structure comprises 280 residues: MYIHFPQFSPIIFSIFSIPIRWYGLMYFLAFIFALWRGKTRAEYYNLTQIEVENLLYSCFIGLFIGGRIGYIIFYNPVFFFENMSHILKIWEGGMSFHGGLLGVIIVLLFFSKKLNKHILEISDFIVPLVPFGLGAGRLGNFINGELWGRIAPDFKFSVLFPNSREIDLNVAANNLELKSLIEKFGVLPRHPSQIYEFVLEGLVLFFVLNYFSKKSMPFGFVSSIFLILYGCFRIFLEIFRQPDRQIGLFLNTFSMGQLLSMPMIVLGILIAINIYVKVL.

3 helical membrane passes run 15-35 (IFSI…IFAL), 60-80 (FIGL…PVFF), and 90-110 (IWEG…VLLF). Arginine 138 is a binding site for a 1,2-diacyl-sn-glycero-3-phospho-(1'-sn-glycerol). 2 helical membrane-spanning segments follow: residues 217–237 (MPFG…RIFL) and 257–277 (GQLL…NIYV).

This sequence belongs to the Lgt family.

Its subcellular location is the cell membrane. The catalysed reaction is L-cysteinyl-[prolipoprotein] + a 1,2-diacyl-sn-glycero-3-phospho-(1'-sn-glycerol) = an S-1,2-diacyl-sn-glyceryl-L-cysteinyl-[prolipoprotein] + sn-glycerol 1-phosphate + H(+). It participates in protein modification; lipoprotein biosynthesis (diacylglyceryl transfer). Its function is as follows. Catalyzes the transfer of the diacylglyceryl group from phosphatidylglycerol to the sulfhydryl group of the N-terminal cysteine of a prolipoprotein, the first step in the formation of mature lipoproteins. This is Phosphatidylglycerol--prolipoprotein diacylglyceryl transferase from Buchnera aphidicola subsp. Baizongia pistaciae (strain Bp).